Reading from the N-terminus, the 358-residue chain is Protein ocs (358 aa).

The protein belongs to the lysopine/nopaline/octopine/opine/vitopine dehydrogenases family. As to quaternary structure, monomer.

It catalyses the reaction D-octopine + NAD(+) + H2O = L-arginine + pyruvate + NADH + H(+). The enzyme catalyses D-lysopine + NADP(+) + H2O = L-lysine + pyruvate + NADPH + H(+). Its function is as follows. Reductive condensation of pyruvate and arginine, lysine, histidine, or octopine to form octopine, lysopine, histopine, or octopinic acid, respectively. NADPH is the preferred cofactor, but NADH can also be used. The polypeptide is Protein ocs (ocs) (Agrobacterium tumefaciens (strain Ach5)).